The primary structure comprises 168 residues: UPF0304 protein MJECS11 (168 aa).

It belongs to the UPF0304 family.

The polypeptide is UPF0304 protein MJECS11 (Methanocaldococcus jannaschii (strain ATCC 43067 / DSM 2661 / JAL-1 / JCM 10045 / NBRC 100440) (Methanococcus jannaschii)).